The primary structure comprises 324 residues: Beta-ketoacyl-[acyl-carrier-protein] synthase III (324 aa).

Residues cysteine 114 and histidine 251 contribute to the active site. Residues 252 to 256 (QANRR) are ACP-binding. Residue asparagine 281 is part of the active site.

Belongs to the thiolase-like superfamily. FabH family. As to quaternary structure, homodimer.

The protein localises to the cytoplasm. It carries out the reaction malonyl-[ACP] + acetyl-CoA + H(+) = 3-oxobutanoyl-[ACP] + CO2 + CoA. It participates in lipid metabolism; fatty acid biosynthesis. Its function is as follows. Catalyzes the condensation reaction of fatty acid synthesis by the addition to an acyl acceptor of two carbons from malonyl-ACP. Catalyzes the first condensation reaction which initiates fatty acid synthesis and may therefore play a role in governing the total rate of fatty acid production. Possesses both acetoacetyl-ACP synthase and acetyl transacylase activities. Its substrate specificity determines the biosynthesis of branched-chain and/or straight-chain of fatty acids. The chain is Beta-ketoacyl-[acyl-carrier-protein] synthase III from Paramagnetospirillum magneticum (strain ATCC 700264 / AMB-1) (Magnetospirillum magneticum).